The sequence spans 74 residues: UPF0352 protein PM1884 (74 aa).

The protein belongs to the UPF0352 family.

The protein is UPF0352 protein PM1884 of Pasteurella multocida (strain Pm70).